The sequence spans 333 residues: Biotin synthase (333 aa).

The region spanning 51–281 is the Radical SAM core domain; that stretch reads HFGNQVSLCG…DVHITICGGR (231 aa). [4Fe-4S] cluster is bound by residues Cys69, Cys73, and Cys76. Cys206 lines the [2Fe-2S] cluster pocket.

It belongs to the radical SAM superfamily. Biotin synthase family. Homodimer. [4Fe-4S] cluster is required as a cofactor. It depends on [2Fe-2S] cluster as a cofactor.

It carries out the reaction (4R,5S)-dethiobiotin + (sulfur carrier)-SH + 2 reduced [2Fe-2S]-[ferredoxin] + 2 S-adenosyl-L-methionine = (sulfur carrier)-H + biotin + 2 5'-deoxyadenosine + 2 L-methionine + 2 oxidized [2Fe-2S]-[ferredoxin]. The protein operates within cofactor biosynthesis; biotin biosynthesis; biotin from 7,8-diaminononanoate: step 2/2. Catalyzes the conversion of dethiobiotin (DTB) to biotin by the insertion of a sulfur atom into dethiobiotin via a radical-based mechanism. The sequence is that of Biotin synthase from Trichlorobacter lovleyi (strain ATCC BAA-1151 / DSM 17278 / SZ) (Geobacter lovleyi).